The following is a 549-amino-acid chain: Chaperonin GroEL (549 aa).

ATP-binding positions include 29-32 (TAGP), lysine 50, 86-90 (DGTTT), glycine 418, and aspartate 499.

It belongs to the chaperonin (HSP60) family. As to quaternary structure, forms a cylinder of 14 subunits composed of two heptameric rings stacked back-to-back. Interacts with the co-chaperonin GroES.

Its subcellular location is the cytoplasm. It catalyses the reaction ATP + H2O + a folded polypeptide = ADP + phosphate + an unfolded polypeptide.. Together with its co-chaperonin GroES, plays an essential role in assisting protein folding. The GroEL-GroES system forms a nano-cage that allows encapsulation of the non-native substrate proteins and provides a physical environment optimized to promote and accelerate protein folding. This is Chaperonin GroEL from Wolbachia pipientis wMel.